A 329-amino-acid chain; its full sequence is Ephrin-B1 (329 aa).

The first 20 residues, 1-20, serve as a signal peptide directing secretion; that stretch reads MEGLRRLLGLLLVLYRLCSA. At 21–226 the chain is on the extracellular side; it reads LGKNLEPVTW…FFNSKIAVFA (206 aa). Residues 23-157 enclose the Ephrin RBD domain; that stretch reads KNLEPVTWNS…TRSMKIIMKV (135 aa). 2 cysteine pairs are disulfide-bonded: cysteine 57-cysteine 94 and cysteine 82-cysteine 146. N-linked (GlcNAc...) asparagine glycosylation occurs at asparagine 132. The segment at 163-192 is disordered; the sequence is AVPPEQLTTTRPSKEADNTGKIATFGPWNG. N-linked (GlcNAc...) asparagine glycosylation is present at asparagine 203. Residues 227-247 form a helical membrane-spanning segment; the sequence is AIGAGCVIFILIIIFLVVLLI. Residues 248–329 lie on the Cytoplasmic side of the membrane; it reads KIRKRHRKHT…QSPANIYYKV (82 aa). Residues 327-329 carry the PDZ-binding motif; sequence YKV.

Belongs to the ephrin family. In terms of assembly, interacts with TLE4 through the PDZ-binding motif. Inducible phosphorylation of tyrosine residues in the cytoplasmic domain. Tyrosine phosphorylation inhibits TLE4-binding. As to expression, expressed at low levels in most tissues with highest levels in the kidney, oocytes, ovary and testis.

It localises to the membrane. Cell surface transmembrane ligand for Eph receptors, a family of receptor tyrosine kinases which are crucial for migration, repulsion and adhesion during neuronal, vascular and epithelial development. Binds promiscuously Eph receptors residing on adjacent cells, leading to contact-dependent bidirectional signaling into neighboring cells. The signaling pathway downstream of the receptor is referred to as forward signaling while the signaling pathway downstream of the ephrin ligand is referred to as reverse signaling. May have a role in the developing mesenchymal and nervous tissue. The sequence is that of Ephrin-B1 (efnb1) from Xenopus laevis (African clawed frog).